The chain runs to 318 residues: GTP cyclohydrolase MptA (318 aa).

This sequence belongs to the GTP cyclohydrolase IV family. As to quaternary structure, homodimer. Requires Fe(2+) as cofactor.

It catalyses the reaction GTP + H2O = 7,8-dihydroneopterin 2',3'-cyclic phosphate + formate + diphosphate + H(+). The protein operates within cofactor biosynthesis; 5,6,7,8-tetrahydromethanopterin biosynthesis. Functionally, converts GTP to 7,8-dihydro-D-neopterin 2',3'-cyclic phosphate, the first intermediate in the biosynthesis of coenzyme methanopterin. The protein is GTP cyclohydrolase MptA of Methanothermobacter thermautotrophicus (strain ATCC 29096 / DSM 1053 / JCM 10044 / NBRC 100330 / Delta H) (Methanobacterium thermoautotrophicum).